The following is a 150-amino-acid chain: Photosystem II extrinsic protein V (150 aa).

The first 20 residues, 1-20 (MIRVIMLLVLVWMTPMISWA), serve as a signal peptide directing secretion. Heme c is bound by residues cysteine 50, cysteine 53, histidine 54, and histidine 105.

This sequence belongs to the cytochrome c family. PsbV subfamily. As to quaternary structure, PSII is composed of 1 copy each of membrane proteins PsbA, PsbB, PsbC, PsbD, PsbE, PsbF, PsbH, PsbI, PsbJ, PsbK, PsbL, PsbM, PsbT, PsbY, PsbZ, Psb30/Ycf12, at least 3 peripheral proteins of the oxygen-evolving complex and a large number of cofactors. It forms dimeric complexes. The extrinsic subunits in red algae are PsbO (OEC33), PsbQ', cytochrome c-550 and PsbU. The cofactor is heme c.

It localises to the plastid. The protein resides in the chloroplast thylakoid membrane. Its function is as follows. One of the extrinsic, lumenal subunits of photosystem II (PSII). PSII is a light-driven water plastoquinone oxidoreductase, using light energy to abstract electrons from H(2)O, generating a proton gradient subsequently used for ATP formation. The extrinsic proteins stabilize the structure of photosystem II oxygen-evolving complex (OEC), the ion environment of oxygen evolution and protect the OEC against heat-induced inactivation. This is Photosystem II extrinsic protein V from Cyanidioschyzon merolae (strain NIES-3377 / 10D) (Unicellular red alga).